The sequence spans 287 residues: Large ribosomal subunit protein uL2 (287 aa).

The tract at residues 221 to 287 is disordered; it reads RGSVMNPCDH…SKRSRGGRDS (67 aa). Over residues 258-287 the composition is skewed to basic residues; that stretch reads KTRKRNKPSNRFVLRKRRRVSKRSRGGRDS.

The protein belongs to the universal ribosomal protein uL2 family. As to quaternary structure, part of the 50S ribosomal subunit. Forms a bridge to the 30S subunit in the 70S ribosome.

One of the primary rRNA binding proteins. Required for association of the 30S and 50S subunits to form the 70S ribosome, for tRNA binding and peptide bond formation. It has been suggested to have peptidyltransferase activity; this is somewhat controversial. Makes several contacts with the 16S rRNA in the 70S ribosome. The sequence is that of Large ribosomal subunit protein uL2 from Prochlorococcus marinus (strain SARG / CCMP1375 / SS120).